Here is a 558-residue protein sequence, read N- to C-terminus: Cytochrome c oxidase subunit 1-beta (558 aa).

Topologically, residues 1-28 are cytoplasmic; it reads MADAAVHGHGDHHDTRGFFTRWFMSTNH. A helical membrane pass occupies residues 29-59; sequence KDIGILYLFTAGIVGLISVCFTVYMRMELQH. Residues 60 to 82 lie on the Periplasmic side of the membrane; sequence PGVQYMCLEGARLIADASAECTP. C66 and C80 are oxidised to a cystine. The chain crosses the membrane as a helical span at residues 83 to 120; it reads NGHLWNVMITYHGVLMMFFVVIPALFGGFGNYFMPLHI. H94 serves as a coordination point for Fe(II)-heme a. The Cytoplasmic segment spans residues 121–126; it reads GAPDMA. Residues 127-151 traverse the membrane as a helical segment; it reads FPRLNNLSYWMYVCGVALGVASLLA. Residues 152–176 are Periplasmic-facing; that stretch reads PGGNDQMGSGVGWVLYPPLSTTEAG. A helical membrane pass occupies residues 177 to 206; sequence YSMDLAIFAVHVSGASSILGAINIITTFLN. Residues 207-217 lie on the Cytoplasmic side of the membrane; sequence MRAPGMTLFKV. The chain crosses the membrane as a helical span at residues 218–251; it reads PLFAWSVFITAWLILLSLPVLAGAITMLLMDRNF. Residues 252–262 are Periplasmic-facing; it reads GTQFFDPAGGG. The helical transmembrane segment at 263–299 threads the bilayer; that stretch reads DPVLYQHILWFFGHPEVYIIILPGFGIISHVISTFAK. Positions 276 and 280 each coordinate Cu cation. The segment at residues 276-280 is a cross-link (1'-histidyl-3'-tyrosine (His-Tyr)); sequence HPEVY. Over 300–303 the chain is Cytoplasmic; it reads KPIF. Residues 304-331 form a helical membrane-spanning segment; the sequence is GYLPMVLAMAAIGILGFVVWAHHMYTAG. H325 and H326 together coordinate Cu cation. A topological domain (periplasmic) is located at residue M332. A helical transmembrane segment spans residues 333-364; it reads SLTQQAYFMLATMTIAVPTGIKVFSWIATMWG. Residues 365–369 lie on the Cytoplasmic side of the membrane; that stretch reads GSIEF. A helical transmembrane segment spans residues 370-395; the sequence is KTPMLWAFGFLFLFTVGGVTGVVLSQ. The Periplasmic portion of the chain corresponds to 396 to 404; sequence APLDRVYHD. A helical transmembrane segment spans residues 405-437; the sequence is TYYVVAHFHYVMSLGAVFGIFAGVYYWIGKMSG. H411 is a heme a3 binding site. H413 contacts Fe(II)-heme a. At 438–440 the chain is on the cytoplasmic side; the sequence is RQY. The chain crosses the membrane as a helical span at residues 441 to 469; sequence PEWAGQLHFWMMFIGSNLIFFPQHFLGRQ. The Periplasmic segment spans residues 470 to 478; the sequence is GMPRRYIDY. Residues 479 to 514 traverse the membrane as a helical segment; it reads PVEFAYWNNISSIGAYISFASFLFFIGIVFYTLFAG. Over 515–558 the chain is Cytoplasmic; the sequence is KRVNVPNYWNEHADTLEWTLPSPPPEHTFETLPKREDWDRAHAH.

This sequence belongs to the heme-copper respiratory oxidase family. Cu(2+) is required as a cofactor. It depends on heme as a cofactor. In terms of processing, his-276 and Tyr-280 are involved in the formation of a copper-coordinated covalent cross-link at the active site of the catalytic subunit I.

Its subcellular location is the cell inner membrane. It catalyses the reaction 4 Fe(II)-[cytochrome c] + O2 + 8 H(+)(in) = 4 Fe(III)-[cytochrome c] + 2 H2O + 4 H(+)(out). It participates in energy metabolism; oxidative phosphorylation. Subunit I and II form the functional core of the enzyme complex. Electrons originating in cytochrome c are transferred via heme a and Cu(A) to the binuclear center formed by heme a3 and Cu(B). This cytochrome c oxidase shows proton pump activity across the membrane in addition to the electron transfer. This is Cytochrome c oxidase subunit 1-beta (ctaDII) from Paracoccus denitrificans.